The primary structure comprises 61 residues: Opistoporin-4 (61 aa).

Residues E45–Y61 constitute a propeptide that is removed on maturation.

Belongs to the non-disulfide-bridged peptide (NDBP) superfamily. Long chain multifunctional peptide (group 2) family. Expressed by the venom gland.

It is found in the secreted. It localises to the target cell membrane. In terms of biological role, at high concentrations, acts as a pore former in cellular membranes and causes the leakage of the cells. At submicromolar concentrations, degranulates granulocytes and has a weak hemolytic activity against human erythrocytes. Also strongly inhibits the production of superoxide anions. Has a strong antibacterial activity against Gram-negative bacteria but is less active against Gram-positive bacteria. Also has antifungal activity. The protein is Opistoporin-4 of Opistophthalmus carinatus (African yellow leg scorpion).